Reading from the N-terminus, the 150-residue chain is MERTFLMIKPDGVQRKLVGEIITRLEKKGLKLVGGKFMTVSKEKAETHYGEHADKPFYEGLVSFITSAPVFAMVVEGENVVEVTRNMIGKTNPTEAAPGTIRGDLGLTVGRNVIHGSDSVESAKREISLWFEPNELSVYTANDEEWLYEN.

ATP contacts are provided by Lys9, Phe57, Arg85, Thr91, Arg102, and Asn112. His115 acts as the Pros-phosphohistidine intermediate in catalysis.

Belongs to the NDK family. Homotetramer. It depends on Mg(2+) as a cofactor.

The protein localises to the cytoplasm. The catalysed reaction is a 2'-deoxyribonucleoside 5'-diphosphate + ATP = a 2'-deoxyribonucleoside 5'-triphosphate + ADP. It carries out the reaction a ribonucleoside 5'-diphosphate + ATP = a ribonucleoside 5'-triphosphate + ADP. Functionally, major role in the synthesis of nucleoside triphosphates other than ATP. The ATP gamma phosphate is transferred to the NDP beta phosphate via a ping-pong mechanism, using a phosphorylated active-site intermediate. The protein is Nucleoside diphosphate kinase of Staphylococcus carnosus (strain TM300).